The primary structure comprises 65 residues: Antimicrobial peptide 1 (65 aa).

Residues 1-27 form the signal peptide; the sequence is MAKVSSAYLKFALVMILLLSVISAVMS. Disulfide bonds link C30-C47, C37-C51, and C46-C62.

This sequence belongs to the AMP family. Seed specific.

Its subcellular location is the secreted. Possesses antifungal activity. In Phytolacca americana (American pokeweed), this protein is Antimicrobial peptide 1.